The primary structure comprises 407 residues: Arginine biosynthesis bifunctional protein ArgJ (407 aa).

Substrate-binding residues include T157, K183, T194, E280, N402, and T407. Catalysis depends on T194, which acts as the Nucleophile.

It belongs to the ArgJ family. As to quaternary structure, heterotetramer of two alpha and two beta chains.

It localises to the cytoplasm. It catalyses the reaction N(2)-acetyl-L-ornithine + L-glutamate = N-acetyl-L-glutamate + L-ornithine. The enzyme catalyses L-glutamate + acetyl-CoA = N-acetyl-L-glutamate + CoA + H(+). It participates in amino-acid biosynthesis; L-arginine biosynthesis; L-ornithine and N-acetyl-L-glutamate from L-glutamate and N(2)-acetyl-L-ornithine (cyclic): step 1/1. Its pathway is amino-acid biosynthesis; L-arginine biosynthesis; N(2)-acetyl-L-ornithine from L-glutamate: step 1/4. In terms of biological role, catalyzes two activities which are involved in the cyclic version of arginine biosynthesis: the synthesis of N-acetylglutamate from glutamate and acetyl-CoA as the acetyl donor, and of ornithine by transacetylation between N(2)-acetylornithine and glutamate. The polypeptide is Arginine biosynthesis bifunctional protein ArgJ (Bacillus cereus (strain ATCC 10987 / NRS 248)).